The sequence spans 33 residues: Neutrophil defensin 3 (33 aa).

Cystine bridges form between Cys-3/Cys-31, Cys-5/Cys-20, and Cys-10/Cys-30.

Belongs to the alpha-defensin family.

It is found in the secreted. Its function is as follows. Anti-fungal and bactericidal activity, greater against Gram-positive bacteria. In Mesocricetus auratus (Golden hamster), this protein is Neutrophil defensin 3.